We begin with the raw amino-acid sequence, 825 residues long: Neuroligin-3 (825 aa).

Positions 1 to 34 (MWLQPSLSLSPTPTVGRSLCLTLGFLSLVLRAST) are cleaved as a signal peptide. At 35–686 (QAPAPTVNTH…NPRDYSTELS (652 aa)) the chain is on the extracellular side. A glycan (N-linked (GlcNAc...) asparagine) is linked at Asn-95. Cys-103 and Cys-138 are oxidised to a cystine. The tract at residues 151 to 172 (SGAKKQGEDLADNDGDEDEDIR) is disordered. Acidic residues predominate over residues 159–171 (DLADNDGDEDEDI). Disulfide bonds link Cys-317/Cys-328 and Cys-487/Cys-521. Asn-522 carries N-linked (GlcNAc...) asparagine glycosylation. 2 stretches are compositionally biased toward polar residues: residues 622–633 (TKVPPPDTTHSS) and 654–666 (AYSN…SWNG). The interval 622–668 (TKVPPPDTTHSSHITRRPNGKTWSTKRPAISPAYSNENAPGSWNGDQ) is disordered. The helical transmembrane segment at 687–707 (VTIAVGASLLFLNVLAFAALY) threads the bilayer. The Cytoplasmic portion of the chain corresponds to 708-825 (YRKDKRRQEP…LPHSHSTTRV (118 aa)). Ser-722 is subject to Phosphoserine. A Phosphotyrosine modification is found at Tyr-769.

This sequence belongs to the type-B carboxylesterase/lipase family. In terms of assembly, homodimer, and heterodimer with NLGN1 and NLGN2. Interacts with neurexins NRXN1, NRXN2 and NRXN3. Interaction with neurexins is mediated by heparan sulfate glycan modification on neurexin. Interacts (via its C-terminus) with DLG4/PSD-95 (via PDZ domain 3). Brain and arteries (at protein level). Detected in heart, brain, spleen, lung, liver, skeletal muscle, kidney and testis. Expressed in olfactory bulb and olfactory epithelium. Found in olfactory ensheathing glia but not in olfactory neurons, and in developing peripheral glia.

The protein localises to the cell membrane. It is found in the synapse. Its function is as follows. Cell surface protein involved in cell-cell-interactions via its interactions with neurexin family members. Plays a role in synapse function and synaptic signal transmission, and probably mediates its effects by recruiting and clustering other synaptic proteins. May promote the initial formation of synapses, but is not essential for this. May also play a role in glia-glia or glia-neuron interactions in the developing peripheral nervous system. The chain is Neuroligin-3 (Nlgn3) from Mus musculus (Mouse).